A 1744-amino-acid chain; its full sequence is Myotubularin-related protein 5 (1744 aa).

Residues 14 to 150 (DTVAVIVLEE…IRFLTYELVE (137 aa)) enclose the uDENN domain. In terms of domain architecture, cDENN spans 165-304 (ELGFELIPIS…YYNSLHQRLR (140 aa)). The 107-residue stretch at 306 to 412 (VMFTTTSQED…LTRALPRRKH (107 aa)) folds into the dDENN domain. The region spanning 787-871 (KGNFDPVLAH…LYSMESFKKL (85 aa)) is the GRAM domain. The Myotubularin phosphatase domain occupies 996–1447 (NAHIRYAVID…PQIHMWPFLA (452 aa)). Polar residues predominate over residues 1102-1116 (TGSMTGSQQTLHSKA). Positions 1102–1123 (TGSMTGSQQTLHSKASSNEESS) are disordered. The segment at 1540-1590 (IHELTPFTVGARPVQCCYCTNILTRWSKAVHCKKCRIHVHEGCVNRNITIG) adopts a Phorbol-ester/DAG-type zinc-finger fold. One can recognise a PH domain in the interval 1643–1743 (PPLCTGYLSK…WKECIEQVIR (101 aa)).

This sequence belongs to the protein-tyrosine phosphatase family. Non-receptor class myotubularin subfamily.

Functionally, probably acts as an adapter for other myotubularin-like phosphatases. In Caenorhabditis elegans, this protein is Myotubularin-related protein 5.